Reading from the N-terminus, the 126-residue chain is Large ribosomal subunit protein bL12 (126 aa).

This sequence belongs to the bacterial ribosomal protein bL12 family. Homodimer. Part of the ribosomal stalk of the 50S ribosomal subunit. Forms a multimeric L10(L12)X complex, where L10 forms an elongated spine to which 2 to 4 L12 dimers bind in a sequential fashion. Binds GTP-bound translation factors.

In terms of biological role, forms part of the ribosomal stalk which helps the ribosome interact with GTP-bound translation factors. Is thus essential for accurate translation. This Solibacter usitatus (strain Ellin6076) protein is Large ribosomal subunit protein bL12.